We begin with the raw amino-acid sequence, 293 residues long: Protease HtpX (293 aa).

The next 2 membrane-spanning stretches (helical) occupy residues 4–24 and 34–54; these read IALF…VLSL and GLMI…LLMS. H139 provides a ligand contact to Zn(2+). Residue E140 is part of the active site. H143 contacts Zn(2+). Helical transmembrane passes span 158–178 and 193–213; these read VVNT…AGFL and MVYF…ASII. E222 is a Zn(2+) binding site.

This sequence belongs to the peptidase M48B family. Requires Zn(2+) as cofactor.

Its subcellular location is the cell inner membrane. In Yersinia pseudotuberculosis serotype O:1b (strain IP 31758), this protein is Protease HtpX.